Reading from the N-terminus, the 122-residue chain is Large ribosomal subunit protein uL14 (122 aa).

This sequence belongs to the universal ribosomal protein uL14 family. In terms of assembly, part of the 50S ribosomal subunit. Forms a cluster with proteins L3 and L19. In the 70S ribosome, L14 and L19 interact and together make contacts with the 16S rRNA in bridges B5 and B8.

Its function is as follows. Binds to 23S rRNA. Forms part of two intersubunit bridges in the 70S ribosome. This is Large ribosomal subunit protein uL14 from Corynebacterium kroppenstedtii (strain DSM 44385 / JCM 11950 / CIP 105744 / CCUG 35717).